Reading from the N-terminus, the 583-residue chain is Probable lysosomal cobalamin transporter (583 aa).

10 helical membrane-spanning segments follow: residues 8 to 28 (LIWAVYAIVVAILAAVASVFI), 41 to 61 (VILTCIVAVTTLLATVLLVPV), 95 to 115 (IVYYFLYSLDALLCLIVIPFI), 145 to 165 (TVSFLAIVVVLFLVGFFVPVA), 188 to 208 (ALTFALGLLITIGLCLYVLYT), 312 to 332 (LLSGVIFSLLALIIWISMLLT), 347 to 367 (GYILGHINVFNPINWVFVQSA), 375 to 395 (VIFTLLVLFLFSSSIVGISAV), 418 to 438 (LLATAMLMLIILALNYSTSMI), and 506 to 526 (FFGAIFFWAQFAFLGIYLLVM). A compositionally biased stretch (acidic residues) spans 541–552 (LDEDAEEAEEES). A disordered region spans residues 541–562 (LDEDAEEAEEESLLANTRGRAE).

It belongs to the LIMR family. LMBRD1 subfamily.

The protein resides in the lysosome membrane. In terms of biological role, probable lysosomal cobalamin transporter. Required to export cobalamin from lysosomes allowing its conversion to cofactors. This chain is Probable lysosomal cobalamin transporter, found in Aspergillus oryzae (strain ATCC 42149 / RIB 40) (Yellow koji mold).